A 487-amino-acid polypeptide reads, in one-letter code: DNA-dependent metalloprotease SPRTN (487 aa).

The residue at position 1 (Met1) is an N-acetylmethionine. One can recognise a SprT-like domain in the interval 45 to 212 (LQGLFVLFND…KTCGGTYIKI (168 aa)). His111 is a Zn(2+) binding site. Residue Glu112 is part of the active site. Residues His115 and His130 each contribute to the Zn(2+) site. The interval 219 to 248 (SKKGKGKTKLRKQPVSEAENKDKPNRGEKQ) is disordered. The span at 220–230 (KKGKGKTKLRK) shows a compositional bias: basic residues. Lys230 bears the N6-acetyllysine mark. Positions 236–247 (AENKDKPNRGEK) are enriched in basic and acidic residues. The SHP-box motif lies at 253 to 261 (FTGKGYVLG). At Ser267 the chain carries Phosphoserine. Polar residues predominate over residues 280 to 289 (SQEPLSQDHS). Residues 280-317 (SQEPLSQDHSANALRPHSKTEVKFEQNGPSKKTSVASP) form a disordered region. A Glycyl lysine isopeptide (Lys-Gly) (interchain with G-Cter in SUMO2) cross-link involves residue Lys302. Over residues 306–317 (NGPSKKTSVASP) the composition is skewed to polar residues. A PIP-box motif is present at residues 324 to 331 (QNVLSNYF). Lys340 participates in a covalent cross-link: Glycyl lysine isopeptide (Lys-Gly) (interchain with G-Cter in SUMO2); alternate. Residue Lys340 forms a Glycyl lysine isopeptide (Lys-Gly) (interchain with G-Cter in ubiquitin); alternate linkage. The interval 347–379 (GSPVKSLTVGDSTTKSVSAGSQRRVTSSRTSLR) is disordered. Ser373 is modified (phosphoserine). The Nuclear localization signal motif lies at 401–412 (GKLPSKRPRIED). Lys413 is covalently cross-linked (Glycyl lysine isopeptide (Lys-Gly) (interchain with G-Cter in ubiquitin)). Glycyl lysine isopeptide (Lys-Gly) (interchain with G-Cter in SUMO2) cross-links involve residues Lys422 and Lys423. Residues 427–455 (QSGGGDVTSSSHPPAAAQSPSGASGQSRV) are disordered. Residues 435-453 (SSSHPPAAAQSPSGASGQS) are compositionally biased toward low complexity. The segment at 455-482 (VVHCPVCQDEVSETQINEHLDWCLERDS) adopts a UBZ4-type zinc-finger fold. Positions 458, 461, 473, and 477 each coordinate Zn(2+). A Glycyl lysine isopeptide (Lys-Gly) (interchain with G-Cter in SUMO2) cross-link involves residue Lys486.

This sequence belongs to the Spartan family. Homodimer. Interacts (VIA PIP-box) with PCNA (when ubiquitinated). Interacts (via its SHP-box) with VCP/p97. Interacts with RAD18. Interacts with KCTD13 and POLD3. The cofactor is Zn(2+). Autocatalytically cleaved in response to double-stranded DNA-binding: autocatalytic cleavage takes place in trans and leads to inactivation. In terms of processing, monoubiquitinated; monoubiquitination promotes exclusion from chromatin. Deubiquitinated by VCPIP1: deubiquitination is required for subsequent acetylation and recruitment to chromatin and DNA damage sites. Post-translationally, acetylated following deubiquitination by VCPIP1, leading to recruitment to chromatin and DNA damage sites. Phosphorylation by CHEK1 promotes recruitment to chromatin.

The protein localises to the nucleus. It is found in the chromosome. With respect to regulation, DNA-binding activates the protease activity: single-stranded DNA-binding specifically activates ability to cleave covalent DNA-protein cross-links (DPCs). In contrast, double-stranded DNA-binding specifically activates autocatalytic cleavage, and subsequent inactivation. In terms of biological role, DNA-dependent metalloendopeptidase that mediates the proteolytic cleavage of covalent DNA-protein cross-links (DPCs) during DNA synthesis, thereby playing a key role in maintaining genomic integrity. DPCs are highly toxic DNA lesions that interfere with essential chromatin transactions, such as replication and transcription, and which are induced by reactive agents, such as UV light or formaldehyde. Associates with the DNA replication machinery and specifically removes DPCs during DNA synthesis. Catalyzes proteolytic cleavage of the HMCES DNA-protein cross-link following unfolding by the BRIP1/FANCJ helicase. Acts as a pleiotropic protease for DNA-binding proteins cross-linked with DNA, such as TOP1, TOP2A, histones H3 and H4. Mediates degradation of DPCs that are not ubiquitinated, while it is not able to degrade ubiquitinated DPCs. SPRTN activation requires polymerase collision with DPCs followed by helicase bypass of DPCs. Involved in recruitment of VCP/p97 to sites of DNA damage. Also acts as an activator of CHEK1 during normal DNA replication by mediating proteolytic cleavage of CHEK1, thereby promoting CHEK1 removal from chromatin and subsequent activation. Does not activate CHEK1 in response to DNA damage. May also act as a 'reader' of ubiquitinated PCNA: recruited to sites of UV damage and interacts with ubiquitinated PCNA and RAD18, the E3 ubiquitin ligase that monoubiquitinates PCNA. Facilitates chromatin association of RAD18 and is required for efficient PCNA monoubiquitination, promoting a feed-forward loop to enhance PCNA ubiquitination and translesion DNA synthesis. In Bos taurus (Bovine), this protein is DNA-dependent metalloprotease SPRTN.